Here is a 230-residue protein sequence, read N- to C-terminus: Orotidine 5'-phosphate decarboxylase (230 aa).

Substrate-binding positions include Asp10, Lys31, 58 to 67 (DLKLHDIPNT), Thr117, Arg179, Gln188, Gly208, and Arg209. The active-site Proton donor is Lys60.

It belongs to the OMP decarboxylase family. Type 1 subfamily. As to quaternary structure, homodimer.

It catalyses the reaction orotidine 5'-phosphate + H(+) = UMP + CO2. It functions in the pathway pyrimidine metabolism; UMP biosynthesis via de novo pathway; UMP from orotate: step 2/2. In terms of biological role, catalyzes the decarboxylation of orotidine 5'-monophosphate (OMP) to uridine 5'-monophosphate (UMP). This is Orotidine 5'-phosphate decarboxylase from Staphylococcus epidermidis (strain ATCC 35984 / DSM 28319 / BCRC 17069 / CCUG 31568 / BM 3577 / RP62A).